Reading from the N-terminus, the 654-residue chain is Protein THALLO (654 aa).

Residues 1–16 (MGKKGGTLKRSSKSTK) show a composition bias toward basic residues. Disordered regions lie at residues 1–23 (MGKK…DIVE), 35–145 (KQRD…SDDE), and 164–212 (SITA…KDTH). The short motif at 2-9 (GKKGGTLK) is the Nuclear localization signal 1 element. Composition is skewed to acidic residues over residues 44-56 (VNDD…EDDV), 64-82 (GVDD…EEAE), and 103-114 (GDDEMADDDKDK). Residues 140 to 160 (LSSDDEDIKAEEEEVIRLRAE) are a coiled coil. Over residues 171-181 (GLDDDSEEDSD) the composition is skewed to acidic residues. Residues 182-212 (RELTMEEISDKGKQATKSITDKKEKGDKDTH) show a composition bias toward basic and acidic residues. Residues 243–263 (LSELNDAVEELESKINPVMNK) are a coiled coil. Disordered stretches follow at residues 362-397 (SDSV…HQND), 470-492 (VSTK…DDIG), and 509-654 (KSSE…SIRM). A compositionally biased stretch (basic and acidic residues) spans 364–387 (SVDRITQDTAKPMKIDNAREEKKK). Residues 524-546 (SDDEDDNDGDNNDMVDNDGESED) show a composition bias toward acidic residues. A compositionally biased stretch (basic residues) spans 552 to 561 (VKQKQQAKRA). Residues 588-599 (SNQMVSNRGLTR) show a composition bias toward polar residues. The Nuclear localization signal 2 signature appears at 608-615 (PRKKYRKN). Residues 645–654 (NPNTSRSIRM) are compositionally biased toward polar residues.

This sequence belongs to the SAS10 family. Interacts with NUCL1, NUCL2, JMJ14, NOF1 and MPP10 in the nucleus. Mainly present in tissues undergoing rapid cellular growth and differentiation. Mostly expressed in shoots and flowers, and, to a lower extent, in leaves, siliques, roots and seedlings.

It localises to the nucleus. It is found in the nucleolus. Its function is as follows. Essential protein during embryogenesis. Involved both in gene transcription regulation and in processing events critical for proper rRNA biogenesis and nucleolar organization during reproduction; contributes to pre-rRNA processing at the 5' external transcribed spacer. Binds RNA. The sequence is that of Protein THALLO from Arabidopsis thaliana (Mouse-ear cress).